Reading from the N-terminus, the 312-residue chain is Malate dehydrogenase (312 aa).

NAD(+) is bound by residues 7–13 and Asp34; that span reads GAAGGIG. Substrate contacts are provided by Arg81 and Arg87. NAD(+) is bound by residues Asn94 and 117–119; that span reads ITN. Residues Asn119 and Arg153 each coordinate substrate. His177 acts as the Proton acceptor in catalysis. NAD(+) is bound at residue Met227.

This sequence belongs to the LDH/MDH superfamily. MDH type 1 family. As to quaternary structure, homodimer.

The catalysed reaction is (S)-malate + NAD(+) = oxaloacetate + NADH + H(+). Catalyzes the reversible oxidation of malate to oxaloacetate. The protein is Malate dehydrogenase of Escherichia coli O7:K1 (strain IAI39 / ExPEC).